Reading from the N-terminus, the 319-residue chain is Sphingomyelinase D (319 aa).

Positions 1-23 are cleaved as a signal peptide; that stretch reads MTPLLRTICAILCILIAVPLTFA. Residue H44 is part of the active site. Residues E64, D66, and D109 each contribute to the Mg(2+) site. The short motif at 312 to 319 is the SMD-tail element; that stretch reads ATGADKPW.

Belongs to the sphingomyelinase D/phospholipase D family. Mg(2+) serves as cofactor.

It localises to the secreted. The catalysed reaction is a sphingomyelin + H2O = an N-acylsphing-4-enine 1-phosphate + choline + H(+). Catalyzes the hydrolysis of sphingomyelin. Sphingomyelinases D are produced by some spider in their venoms, but also by arthropods such as ticks, or pathogenic bacteria and fungi. They might play a role in pathogenicity through different mechanisms, such as membrane destabilization and host cell penetration, but also pulmonary inflammation and cutaneous lesions. In Ajellomyces capsulatus (strain G186AR / H82 / ATCC MYA-2454 / RMSCC 2432) (Darling's disease fungus), this protein is Sphingomyelinase D.